Consider the following 436-residue polypeptide: MRRDVNGVTKSRFEMFSNSDEAVINKKLPKELLLRIFSFLDVVTLCRCAQVSRAWNVLALDGSNWQRIDLFDFQRDIEGRVVENISKRCGGFLRKLSLRGCLGVGDNALRTFAQNCRNIEVLSLNGCTKTTDATCTSLSKFCSKLRHLDLASCTSITNMSLKALSEGCPLLEQLNISWCDQVTKDGIQALVRGCGGLKALFLKGCTQLEDEALKYIGAHCPELVTLNLQTCLQITDEGLITICRGCHKLQSLCASGCSNITDAILNALGQNCPRLRILEVARCSQLTDVGFTTLARNCHELEKMDLEECVQITDSTLIQLSIHCPRLQVLSLSHCELITDDGIRHLGNGACAHDQLEVIELDNCPLITDASLEHLKSCHSLERIELYDCQQITRAGIKRLRTHLPNIKVHAYFAPVTPPPSVGGSRQRFCRCCIIL.

The F-box domain maps to alanine 22–isoleucine 68. LRR repeat units lie at residues glutamine 74–glycine 100, cysteine 101–glycine 126, cysteine 127–serine 152, cysteine 153–tryptophan 178, cysteine 179–glycine 204, cysteine 205–threonine 230, cysteine 231–glycine 256, cysteine 257–arginine 282, cysteine 283–glutamate 308, cysteine 309–histidine 334, cysteine 335–asparagine 363, cysteine 364–aspartate 388, and cysteine 389–alanine 414. Position 417 is a phosphothreonine (threonine 417). Serine 421 is modified (phosphoserine).

As to quaternary structure, interacts with SKP1 and CUL1. As to expression, highly expressed in brain.

Its subcellular location is the cytoplasm. Its function is as follows. Substrate-recognition component of the SCF (SKP1-CUL1-F-box protein)-type E3 ubiquitin ligase complex. Isoform 3 regulates neural transmission by binding and ubiquitinating RIMS1, a modulator of presynaptic plasticity. The polypeptide is F-box/LRR-repeat protein 20 (Fbxl20) (Mus musculus (Mouse)).